Consider the following 2615-residue polypeptide: Collagen alpha-5(VI) chain (2615 aa).

The first 18 residues, 1–18 (MKILLIIFVLIIWTETLA), serve as a signal peptide directing secretion. Residues 19 to 1394 (DQSPGPGPVY…TCCCTFCKCP (1376 aa)) are nonhelical region. 7 consecutive VWFA domains span residues 30–209 (DVVF…IKDV), 236–413 (DLVF…LKKL), 442–612 (DIHF…KNEV), 628–797 (DIMF…ERKL), 814–987 (DVVF…FTLV), 1005–1178 (DVIF…KKRI), and 1194–1376 (DIVV…KLSQ). Asn-201 and Asn-260 each carry an N-linked (GlcNAc...) asparagine glycan. Asn-835 carries an N-linked (GlcNAc...) asparagine glycan. Collagen-like domains lie at 1395-1446 (GIPG…GCPG), 1434-1490 (GPQG…KGDP), 1464-1520 (GDDG…PGQN), 1524-1580 (KGQK…TLGA), 1579-1629 (GAEG…LGKK), and 1674-1729 (GDAG…MAGQ). Residues 1395 to 1728 (GIPGPHGTRG…GQRGIKGMAG (334 aa)) are triple-helical region. The tract at residues 1404-1693 (GLQAMKGSQG…NPGIPGGPGP (290 aa)) is disordered. The Cell attachment site signature appears at 1430–1432 (RGD). Positions 1511–1522 (PGDPGNPGQNNN) are enriched in low complexity. Low complexity-rich tracts occupy residues 1601 to 1611 (SQGQKGPQGSP) and 1622 to 1641 (RPGL…LGPV). A nonhelical region region spans residues 1729-2615 (QPVYSQCDLI…EDKEMEATDI (887 aa)). 3 consecutive VWFA domains span residues 1758–1965 (ELVF…MDVV), 1963–2154 (DVVF…AKFL), and 2291–2487 (DVAF…VKPF). A glycan (N-linked (GlcNAc...) asparagine) is linked at Asn-2509.

This sequence belongs to the type VI collagen family. In terms of assembly, trimers composed of three different chains: alpha-1(VI), alpha-2(VI), and alpha-3(VI) or alpha-5(VI) or alpha-6(VI). Prolines at the third position of the tripeptide repeating unit (G-X-Y) are hydroxylated in some or all of the chains. In terms of tissue distribution, expressed in skin, followed by lung, small intestine, colon and testis. In skin, it is expressed in the epidermis with strongest staining in suprabasal viable layers. In ATOD patients, it is absent in the most differentiated upper spinous and granular layers (at protein level).

It localises to the secreted. Its subcellular location is the extracellular space. The protein resides in the extracellular matrix. Its function is as follows. Collagen VI acts as a cell-binding protein. This Homo sapiens (Human) protein is Collagen alpha-5(VI) chain (COL6A5).